Consider the following 427-residue polypeptide: MSRNETLFERAQRTIPGGVNSPVRAFRSVGGTPRFIERAQGPYFWDADGQRYIDYIGSWGPMILGHVHPEVLEAVQRVLGNGFSFGAPTESEVEIAEEICKLVPSIEQVRMVSSGTEATMSALRLARGFTNRSRIVKFEGCYHGHADSLLVKAGSGLLTFGNPTSAGVPADIAKHTTVLEYNNVAELEEAFKAFGNEIASVIVEPVAGNMNLVRATPEFLQALRRLCTEHGSVLIFDEVMCGFRVALGGAQEVYGITPDLTCLGKVIGGGMPAAAFGGRRDIMAHLAPLGGVYQAGTLSGNPIAVAAGLKTLQLIQAPGFYDTLATRTARLVQGLANVAREAKVPFAADSLGGMFGLYFTDSIPTSFAEVTKSDVPRFNAFFHKMLDAGVYFAPSAYEAGFVSIVHDDAIVDATIDAARGAFASLAA.

At K265 the chain carries N6-(pyridoxal phosphate)lysine.

The protein belongs to the class-III pyridoxal-phosphate-dependent aminotransferase family. HemL subfamily. In terms of assembly, homodimer. The cofactor is pyridoxal 5'-phosphate.

The protein resides in the cytoplasm. It carries out the reaction (S)-4-amino-5-oxopentanoate = 5-aminolevulinate. It functions in the pathway porphyrin-containing compound metabolism; protoporphyrin-IX biosynthesis; 5-aminolevulinate from L-glutamyl-tRNA(Glu): step 2/2. In Paraburkholderia phytofirmans (strain DSM 17436 / LMG 22146 / PsJN) (Burkholderia phytofirmans), this protein is Glutamate-1-semialdehyde 2,1-aminomutase.